We begin with the raw amino-acid sequence, 157 residues long: Anaerobic nitrite reductase Hb1 (157 aa).

Residues 5–154 (GFTEEQEALV…LAEAIKSEMK (150 aa)) form the Globin domain. Positions 38 to 42 (EIAPA) match the Homodimerization motif. The heme b site is built by S48, K62, H66, R96, T100, and H101. The short motif at 108–120 (AEHFEVTKLALLE) is the Homodimerization element.

The protein belongs to the plant globin family. As to quaternary structure, homodimer. Heme b is required as a cofactor. In terms of tissue distribution, predominantly expressed in leaves, to a lower extent in roots, and barely in stems, flowers and seeds.

It is found in the cytoplasm. The protein localises to the nucleus. It carries out the reaction Fe(III)-heme b-[protein] + nitric oxide + H2O = Fe(II)-heme b-[protein] + nitrite + 2 H(+). Phytoglobin that reduces nitrite to nitric oxide (NO) under anoxic conditions (e.g. during flooding or in waterlogged soil) and upon root nodulation. Required for general plant development and during nodulation, especially for the onset of symbiosis. Monitors nitric oxide (NO) levels during early phase of the nitrogen-fixing symbiosis and buffers oxygen in functioning nodules. May not function as an oxygen storage or transport protein. Has an unusually high affinity for O(2) through a hexacoordinate heme iron because of a very low dissociation constant. Involved in water stress tolerance. The polypeptide is Anaerobic nitrite reductase Hb1 (Glycine max (Soybean)).